Reading from the N-terminus, the 136-residue chain is Histone H3-like 3 (136 aa).

Over residues 1–15 (MARTKQTARKSHGGK) the composition is skewed to basic residues. The tract at residues 1 to 42 (MARTKQTARKSHGGKAPRTLLATKAARKSAPTTGGVKKPHRY) is disordered. N6,N6,N6-trimethyllysine; alternate is present on residues Lys5 and Lys10. N6,N6-dimethyllysine; alternate is present on residues Lys5 and Lys10. An N6-methyllysine; alternate mark is found at Lys5 and Lys10. Residue Lys10 is modified to N6-acetyllysine; alternate. Phosphoserine is present on Ser11. Lys15 carries the N6-acetyllysine modification. 2 positions are modified to N6-methyllysine; alternate: Lys24 and Lys28. N6-acetyllysine; alternate is present on Lys24. Lys28 is modified (N6,N6,N6-trimethyllysine; alternate). The residue at position 28 (Lys28) is an N6,N6-dimethyllysine; alternate. Position 29 is a phosphoserine (Ser29). Lys37 carries the post-translational modification N6,N6,N6-trimethyllysine; alternate. Lys37 carries the N6,N6-dimethyllysine; alternate modification. Position 37 is an N6-methyllysine; alternate (Lys37).

It belongs to the histone H3 family. As to quaternary structure, the nucleosome is a histone octamer containing two molecules each of H2A, H2B, H3 and H4 assembled in one H3-H4 heterotetramer and two H2A-H2B heterodimers. The octamer wraps approximately 147 bp of DNA. In terms of tissue distribution, expressed in roots, seedlings, leaves and open flowers.

It localises to the nucleus. It is found in the chromosome. Its function is as follows. Core component of nucleosome. Nucleosomes wrap and compact DNA into chromatin, limiting DNA accessibility to the cellular machineries which require DNA as a template. Histones thereby play a central role in transcription regulation, DNA repair, DNA replication and chromosomal stability. DNA accessibility is regulated via a complex set of post-translational modifications of histones, also called histone code, and nucleosome remodeling. This is Histone H3-like 3 from Arabidopsis thaliana (Mouse-ear cress).